Reading from the N-terminus, the 121-residue chain is Large ribosomal subunit protein bL19 (121 aa).

Belongs to the bacterial ribosomal protein bL19 family.

Its function is as follows. This protein is located at the 30S-50S ribosomal subunit interface and may play a role in the structure and function of the aminoacyl-tRNA binding site. The polypeptide is Large ribosomal subunit protein bL19 (Chlamydia trachomatis serovar L2 (strain ATCC VR-902B / DSM 19102 / 434/Bu)).